The primary structure comprises 308 residues: MKLQKSELPALLERIYSEVTPLYGVGKTADYIPPLSRVNPRQFGMAIRFVDGDEFTVGQASTPFSIQSISKLFALMLALDIVGDDLWKRVGREPSGMRFNSLLQLENENGIPRNPFINAGAIVVTDTIVNHSASPVKRLEQFMASLSGNVFNRYDPEVYVAEARTGYRNAAIANLLKALGNLEGEVDVVLDSYYKQCSMTMSCLDLARATESLANKGKSSFRTQFHGERMDKRVNALMLTCGLYDAAGNFAYQVGLPAKSGVGGGIVAVLPGYFSVAVWSPELDSYGNSVLGQKALELLTHYTSSSIF.

7 residues coordinate substrate: Ser-68, Asn-118, Glu-162, Asn-169, Tyr-193, Tyr-244, and Val-262.

It belongs to the glutaminase family. As to quaternary structure, homotetramer.

The catalysed reaction is L-glutamine + H2O = L-glutamate + NH4(+). This chain is Glutaminase, found in Hahella chejuensis (strain KCTC 2396).